Consider the following 233-residue polypeptide: Aspartate/glutamate leucyltransferase (233 aa).

The protein belongs to the R-transferase family. Bpt subfamily.

The protein localises to the cytoplasm. The enzyme catalyses N-terminal L-glutamyl-[protein] + L-leucyl-tRNA(Leu) = N-terminal L-leucyl-L-glutamyl-[protein] + tRNA(Leu) + H(+). It catalyses the reaction N-terminal L-aspartyl-[protein] + L-leucyl-tRNA(Leu) = N-terminal L-leucyl-L-aspartyl-[protein] + tRNA(Leu) + H(+). Functions in the N-end rule pathway of protein degradation where it conjugates Leu from its aminoacyl-tRNA to the N-termini of proteins containing an N-terminal aspartate or glutamate. This chain is Aspartate/glutamate leucyltransferase, found in Vibrio parahaemolyticus serotype O3:K6 (strain RIMD 2210633).